Consider the following 421-residue polypeptide: Gamma-glutamyl phosphate reductase (421 aa).

It belongs to the gamma-glutamyl phosphate reductase family.

The protein localises to the cytoplasm. The catalysed reaction is L-glutamate 5-semialdehyde + phosphate + NADP(+) = L-glutamyl 5-phosphate + NADPH + H(+). It participates in amino-acid biosynthesis; L-proline biosynthesis; L-glutamate 5-semialdehyde from L-glutamate: step 2/2. Functionally, catalyzes the NADPH-dependent reduction of L-glutamate 5-phosphate into L-glutamate 5-semialdehyde and phosphate. The product spontaneously undergoes cyclization to form 1-pyrroline-5-carboxylate. This Roseobacter denitrificans (strain ATCC 33942 / OCh 114) (Erythrobacter sp. (strain OCh 114)) protein is Gamma-glutamyl phosphate reductase.